Reading from the N-terminus, the 621-residue chain is Chaperone protein DnaK (621 aa).

The residue at position 175 (T175) is a Phosphothreonine; by autocatalysis. Positions 499–516 (EAHEADDKKRKEDAETRN) are enriched in basic and acidic residues. Disordered stretches follow at residues 499-520 (EAHE…NAEN) and 583-621 (AQQG…KDNK). The segment covering 583 to 602 (AQQGAEGAAGAADSGSANNG) has biased composition (low complexity). Residues 603 to 621 (GDDDVVDAEVVDDDDKDNK) show a composition bias toward acidic residues.

The protein belongs to the heat shock protein 70 family.

Acts as a chaperone. In Bifidobacterium animalis subsp. lactis (strain AD011), this protein is Chaperone protein DnaK.